A 276-amino-acid polypeptide reads, in one-letter code: Octanoyltransferase LipM (276 aa).

Residues 31 to 246 (GKVPPTVRFY…GFASGLEVEL (216 aa)) enclose the BPL/LPL catalytic domain. Cysteine 148 (acyl-thioester intermediate) is an active-site residue.

It belongs to the octanoyltransferase LipM family. Monomer.

It carries out the reaction octanoyl-[ACP] + L-lysyl-[protein] = N(6)-octanoyl-L-lysyl-[protein] + holo-[ACP] + H(+). It participates in protein modification; protein lipoylation via endogenous pathway; protein N(6)-(lipoyl)lysine from octanoyl-[acyl-carrier-protein]. Its function is as follows. Catalyzes the transfer of endogenously produced octanoic acid from octanoyl-acyl-carrier-protein onto the lipoyl domain of GcvH, an intermediate carrier during protein lipoylation. In Brevibacillus brevis (strain 47 / JCM 6285 / NBRC 100599), this protein is Octanoyltransferase LipM.